The chain runs to 997 residues: LPS-assembly protein LptD (997 aa).

The signal sequence occupies residues 1-27 (MLYSPLYQSIRLILFGALGLSSLTVSA).

It belongs to the LptD family. As to quaternary structure, component of the lipopolysaccharide transport and assembly complex. Interacts with LptE and LptA.

It localises to the cell outer membrane. In terms of biological role, together with LptE, is involved in the assembly of lipopolysaccharide (LPS) at the surface of the outer membrane. The chain is LPS-assembly protein LptD from Psychrobacter cryohalolentis (strain ATCC BAA-1226 / DSM 17306 / VKM B-2378 / K5).